A 470-amino-acid chain; its full sequence is ATP synthase subunit beta (470 aa).

ATP is bound at residue 155-162 (GGAGVGKT).

It belongs to the ATPase alpha/beta chains family. In terms of assembly, F-type ATPases have 2 components, CF(1) - the catalytic core - and CF(0) - the membrane proton channel. CF(1) has five subunits: alpha(3), beta(3), gamma(1), delta(1), epsilon(1). CF(0) has three main subunits: a(1), b(2) and c(9-12). The alpha and beta chains form an alternating ring which encloses part of the gamma chain. CF(1) is attached to CF(0) by a central stalk formed by the gamma and epsilon chains, while a peripheral stalk is formed by the delta and b chains.

The protein localises to the cell membrane. The catalysed reaction is ATP + H2O + 4 H(+)(in) = ADP + phosphate + 5 H(+)(out). Its function is as follows. Produces ATP from ADP in the presence of a proton gradient across the membrane. The catalytic sites are hosted primarily by the beta subunits. The protein is ATP synthase subunit beta of Staphylococcus epidermidis (strain ATCC 35984 / DSM 28319 / BCRC 17069 / CCUG 31568 / BM 3577 / RP62A).